The chain runs to 478 residues: Isoeugenol monooxygenase (478 aa).

Fe cation-binding residues include H167, H218, H282, and H471.

This sequence belongs to the carotenoid oxygenase family. Fe(2+) serves as cofactor.

It catalyses the reaction (E)-isoeugenol + O2 = vanillin + acetaldehyde. Its activity is regulated as follows. Inhibited by Co(2+), Ni(2+) and Zn(2+), which may inhibit enzyme activity by replacing iron in the catalytic residues. Inhibited by incubation with high concentrations of the iron chelators 1,10-phenanthroline and Tiron. However, iron is not completely removed by the chelators, suggesting that iron is tightly bound to the enzyme. Involved in isoeugenol degradation. Catalyzes the oxidative cleavage of the side chain double-bond of isoeugenol to form vanillin and acetaldehyde. This is Isoeugenol monooxygenase from Pseudomonas nitroreducens.